A 1023-amino-acid chain; its full sequence is RTX-I toxin determinant A from serotypes 5/10 (1023 aa).

Helical transmembrane passes span 226 to 256 (NNLP…ILSN), 297 to 326 (STTA…ADKF), and 367 to 406 (INSV…SGIL). Hemolysin-type calcium-binding repeat units follow at residues 730 to 747 (FGSR…DDEI), 748 to 765 (YGND…NDVI), 766 to 783 (HGGD…NDRL), 784 to 801 (IGGK…DDEL), 812 to 829 (LGGA…TNLF), and 830 to 847 (DGGV…KDIY).

This sequence belongs to the RTX prokaryotic toxin (TC 1.C.11) family. In terms of processing, palmitoylated by ApxIC. The toxin only becomes active when modified.

It localises to the secreted. It is found in the host cell membrane. Its function is as follows. One of the virulence factors of A.pleuropneumoniae, which has a strong hemolytic activity and is cytotoxic for alveolar macrophages and neutrophils. The chain is RTX-I toxin determinant A from serotypes 5/10 (apxIA) from Actinobacillus pleuropneumoniae (Haemophilus pleuropneumoniae).